Consider the following 364-residue polypeptide: Peptide chain release factor 1 (364 aa).

Glutamine 230 is modified (N5-methylglutamine).

The protein belongs to the prokaryotic/mitochondrial release factor family. Post-translationally, methylated by PrmC. Methylation increases the termination efficiency of RF1.

The protein localises to the cytoplasm. Functionally, peptide chain release factor 1 directs the termination of translation in response to the peptide chain termination codons UAG and UAA. The protein is Peptide chain release factor 1 of Acidothermus cellulolyticus (strain ATCC 43068 / DSM 8971 / 11B).